We begin with the raw amino-acid sequence, 380 residues long: QRFP-like peptide receptor (380 aa).

Over 1-51 the chain is Extracellular; it reads MMLGNMTFTQTILHELLRQHNMTKNEFIERFGLPPLVYVPELSPGAKTVTL. Asn5 and Asn21 each carry an N-linked (GlcNAc...) asparagine glycan. Residues 52–72 form a helical membrane-spanning segment; sequence VFYVIIFLAALLGNTLVVVVV. The Cytoplasmic portion of the chain corresponds to 73-83; it reads WKNKVMRTTMN. Residues 84 to 104 traverse the membrane as a helical segment; it reads IFICSLAASDLLITIVCIPVT. Topologically, residues 105 to 122 are extracellular; it reads LMQNMLQNWIMGDFMCKL. Cys120 and Cys203 are joined by a disulfide. The chain crosses the membrane as a helical span at residues 123–143; the sequence is VPFIQTIAVASSILTLTGIAI. Residues 144–164 are Cytoplasmic-facing; the sequence is ERYYAIIHPLKVKYLLSKTRA. A helical transmembrane segment spans residues 165 to 185; that stretch reads GIILALVWVVSVGVATPMLFV. Topologically, residues 186–216 are extracellular; the sequence is HKAEEIHDFLYEQRFVTCQEKWWGQTQQTSY. A helical transmembrane segment spans residues 217–237; it reads TIFNLVVLFIIPLLTMTSLYI. At 238–269 the chain is on the cytoplasmic side; sequence RIAHRLWVQQPVGVTGNFAHGNSVRRKRQAVK. Residues 270 to 290 form a helical membrane-spanning segment; sequence MLVVVVLLFAVCWLPYHTVTV. The Extracellular segment spans residues 291–305; it reads MNELTGLRLEEKSAK. The helical transmembrane segment at 306-326 threads the bilayer; the sequence is LLIAIVQLIAFSNSFNNPVVY. The Cytoplasmic segment spans residues 327-380; sequence AILNENFKKNFMTMLRCRVNRVSPQQVTPNTLQTPLEQSTRSCRLPAGAPNQQI.

The protein belongs to the G-protein coupled receptor 1 family.

The protein localises to the cell membrane. Its function is as follows. Receptor for QRFP-like peptide. The activity of this receptor is mediated by G proteins which activate a phosphatidyl-inositol-calcium second messenger system. This is QRFP-like peptide receptor from Branchiostoma floridae (Florida lancelet).